Reading from the N-terminus, the 297-residue chain is Palmitoyl-protein thioesterase ABHD10, mitochondrial (297 aa).

The transit peptide at 1–43 (MAAWVPCRKWGWAAVSFGRHRGLIASLARKPPWAWWLSACRQK) directs the protein to the mitochondrion. The 113-residue stretch at 69–181 (IIFIPGYLSN…GVVTQFHSLP (113 aa)) folds into the AB hydrolase-1 domain. Residues serine 143, aspartate 240, and histidine 270 each act as charge relay system in the active site.

It belongs to the AB hydrolase superfamily. Expressed in epididymal sperm but not in testicular sperm (at protein level).

Its subcellular location is the mitochondrion. The enzyme catalyses S-hexadecanoyl-L-cysteinyl-[protein] + H2O = L-cysteinyl-[protein] + hexadecanoate + H(+). It carries out the reaction mycophenolic acid O-acyl-beta-D-glucuronide + H2O = mycophenolate + D-glucuronate + H(+). With respect to regulation, inhibited by palmostatin-B. Acts as an acyl-protein thioesterase that hydrolyzes fatty acids from acylated residues in proteins. Regulates the mitochondrial S-depalmitoylation of the nucleophilic active site residue of peroxiredoxin-5/PRDX5, a key antioxidant protein, therefore modulating mitochondrial antioxidant ability. Also catalyzes the deglucuronidation of mycophenolic acid acyl-glucuronide, an active metabolite of the immunosuppressant drug mycophenolate. This is Palmitoyl-protein thioesterase ABHD10, mitochondrial from Rattus norvegicus (Rat).